Consider the following 139-residue polypeptide: uncharacterized protein (139 aa).

A run of 2 helical transmembrane segments spans residues 35-55 and 57-77; these read LVFLFVVFFSDCFFSITSFLI and FGILSSFLIFSLFCLGFLTVI.

Its subcellular location is the membrane. This is an uncharacterized protein from Saccharomyces cerevisiae (strain ATCC 204508 / S288c) (Baker's yeast).